The primary structure comprises 442 residues: Trigger factor (442 aa).

One can recognise a PPIase FKBP-type domain in the interval 162-247; the sequence is GDRMTFDFEG…VKAIESRELP (86 aa).

Belongs to the FKBP-type PPIase family. Tig subfamily.

The protein resides in the cytoplasm. The catalysed reaction is [protein]-peptidylproline (omega=180) = [protein]-peptidylproline (omega=0). Involved in protein export. Acts as a chaperone by maintaining the newly synthesized protein in an open conformation. Functions as a peptidyl-prolyl cis-trans isomerase. The protein is Trigger factor of Magnetococcus marinus (strain ATCC BAA-1437 / JCM 17883 / MC-1).